A 490-amino-acid polypeptide reads, in one-letter code: UDP-N-acetylmuramate--L-alanine ligase (490 aa).

130 to 136 (GTHGKTT) provides a ligand contact to ATP.

Belongs to the MurCDEF family.

It is found in the cytoplasm. It carries out the reaction UDP-N-acetyl-alpha-D-muramate + L-alanine + ATP = UDP-N-acetyl-alpha-D-muramoyl-L-alanine + ADP + phosphate + H(+). It functions in the pathway cell wall biogenesis; peptidoglycan biosynthesis. Its function is as follows. Cell wall formation. The protein is UDP-N-acetylmuramate--L-alanine ligase of Idiomarina loihiensis (strain ATCC BAA-735 / DSM 15497 / L2-TR).